The sequence spans 777 residues: Subtilisin-like protease SBT1.4 (777 aa).

An N-terminal signal peptide occupies residues 1–25 (MAKLSLSSIFFVFPLLLCFFSPSSS). A propeptide spans 26–110 (SSDGLESYIV…VIPDQAREIH (85 aa)) (activation peptide). Residues 32–110 (SYIVHVQRSH…VIPDQAREIH (79 aa)) form the Inhibitor I9 domain. The 500-residue stretch at 115 to 614 (PAFLGFSQNS…AGHVDPNKAL (500 aa)) folds into the Peptidase S8 domain. Residue aspartate 142 is the Charge relay system of the active site. N-linked (GlcNAc...) asparagine glycosylation is present at asparagine 198. Residues 199–223 (GTKKHAAKESRSPRDTEGHGTHTAS) are disordered. The segment covering 205–218 (AKESRSPRDTEGHG) has biased composition (basic and acidic residues). Histidine 217 serves as the catalytic Charge relay system. N-linked (GlcNAc...) asparagine glycans are attached at residues asparagine 232 and asparagine 395. In terms of domain architecture, PA spans 376 to 461 (LSLVYSGDCG…VGAKAGDQIR (86 aa)). Serine 546 serves as the catalytic Charge relay system.

Belongs to the peptidase S8 family.

It is found in the secreted. This Arabidopsis thaliana (Mouse-ear cress) protein is Subtilisin-like protease SBT1.4.